A 626-amino-acid chain; its full sequence is UvrABC system protein C (626 aa).

A GIY-YIG domain is found at 26–105 (PEPGVYFMRD…IKQHQPHFNV (80 aa)). Positions 215–250 (SELINTLSLQMEQAAEDLNFEQAARLRDQIKGLQGL) constitute a UVR domain.

This sequence belongs to the UvrC family. In terms of assembly, interacts with UvrB in an incision complex.

Its subcellular location is the cytoplasm. The UvrABC repair system catalyzes the recognition and processing of DNA lesions. UvrC both incises the 5' and 3' sides of the lesion. The N-terminal half is responsible for the 3' incision and the C-terminal half is responsible for the 5' incision. This is UvrABC system protein C from Acaryochloris marina (strain MBIC 11017).